Reading from the N-terminus, the 698-residue chain is Sulfhydryl oxidase 2 (698 aa).

Positions 1-21 are cleaved as a signal peptide; that stretch reads MAAAGAAVARSPGIGAGPALR. Positions 34 to 178 constitute a Thioredoxin domain; it reads PRLLVLLAAA…RQTMIDFLQN (145 aa). A glycan (N-linked (GlcNAc...) asparagine) is linked at Asn77. Catalysis depends on nucleophile residues Cys91 and Cys94. 2 disulfides stabilise this stretch: Cys91/Cys94 and Cys122/Cys131. 3 N-linked (GlcNAc...) asparagine glycosylation sites follow: Asn178, Asn218, and Asn266. A disulfide bridge connects residues Cys418 and Cys430. An ERV/ALR sulfhydryl oxidase domain is found at 421-530; it reads SRSELRGYPC…EDPRFPKLQW (110 aa). FAD contacts are provided by residues Arg426, Trp433, His437, Glu478, His482, 505–512, Lys527, and Trp530; that span reads WKKHNMVN. A disulfide bond links Cys476 and Cys479. Cys536 and Cys539 form a disulfide bridge. The segment at 570–624 is disordered; sequence TYSADQGDSSEGGTLARGEEEEKRLTPPEVSHGDRDTQSVRPPGALGPRPALPES. Positions 572–581 are enriched in polar residues; the sequence is SADQGDSSEG. At Ser579 the chain carries Phosphoserine. The segment covering 586 to 607 has biased composition (basic and acidic residues); sequence RGEEEEKRLTPPEVSHGDRDTQ. Low complexity predominate over residues 610 to 622; that stretch reads RPPGALGPRPALP. The helical transmembrane segment at 662-682 threads the bilayer; that stretch reads SLCVVLYVASSLFLMVMYFFF.

The protein belongs to the quiescin-sulfhydryl oxidase (QSOX) family. FAD is required as a cofactor. As to expression, expressed in pancreas, brain, placenta, kidney, heart and fetal tissues. Weakly expressed in lung, liver and skeletal muscles.

The protein resides in the membrane. The protein localises to the secreted. It is found in the cell membrane. Its subcellular location is the nucleus membrane. It catalyses the reaction 2 R'C(R)SH + O2 = R'C(R)S-S(R)CR' + H2O2. Catalyzes the oxidation of sulfhydryl groups in peptide and protein thiols to disulfides with the reduction of oxygen to hydrogen peroxide. May contribute to disulfide bond formation in a variety of secreted proteins. Also seems to play a role in regulating the sensitization of neuroblastoma cells for interferon-gamma-induced apoptosis. This is Sulfhydryl oxidase 2 (QSOX2) from Homo sapiens (Human).